The following is a 270-amino-acid chain: Phospholysine phosphohistidine inorganic pyrophosphate phosphatase (270 aa).

2 residues coordinate Mg(2+): Asp17 and Ser19. Residues 17-19 (DIS), 54-55 (TN), and Lys189 contribute to the substrate site. Residue Asp214 participates in Mg(2+) binding.

The protein belongs to the HAD-like hydrolase superfamily. Homodimer. The cofactor is Mg(2+). In terms of tissue distribution, detected in liver (at protein level).

Its subcellular location is the cytoplasm. It is found in the nucleus. The catalysed reaction is diphosphate + H2O = 2 phosphate + H(+). In terms of biological role, phosphatase that hydrolyzes imidodiphosphate, 3-phosphohistidine and 6-phospholysine. Has broad substrate specificity and can also hydrolyze inorganic diphosphate, but with lower efficiency. This chain is Phospholysine phosphohistidine inorganic pyrophosphate phosphatase (LHPP), found in Bos taurus (Bovine).